The following is a 63-amino-acid chain: Large ribosomal subunit protein bL28 (63 aa).

It belongs to the bacterial ribosomal protein bL28 family.

This is Large ribosomal subunit protein bL28 from Clostridium acetobutylicum (strain ATCC 824 / DSM 792 / JCM 1419 / IAM 19013 / LMG 5710 / NBRC 13948 / NRRL B-527 / VKM B-1787 / 2291 / W).